The following is a 238-amino-acid chain: NAD-dependent protein deacylase (238 aa).

The Deacetylase sirtuin-type domain occupies 1–237; the sequence is MRGIMKVFVL…PAWVERLLAR (237 aa). 12 to 31 is an NAD(+) binding site; the sequence is GAGVSAESGLGTFRDKDGVW. Residues Y56 and R59 each contribute to the substrate site. 94–97 provides a ligand contact to NAD(+); that stretch reads QNVD. The active-site Proton acceptor is H112. Positions 120, 123, 139, and 142 each coordinate Zn(2+). NAD(+) is bound by residues 179–181, 205–207, and A223; these read GTS and NLE.

Belongs to the sirtuin family. Class III subfamily. Requires Zn(2+) as cofactor.

It is found in the cytoplasm. The catalysed reaction is N(6)-acetyl-L-lysyl-[protein] + NAD(+) + H2O = 2''-O-acetyl-ADP-D-ribose + nicotinamide + L-lysyl-[protein]. It catalyses the reaction N(6)-succinyl-L-lysyl-[protein] + NAD(+) + H2O = 2''-O-succinyl-ADP-D-ribose + nicotinamide + L-lysyl-[protein]. In terms of biological role, NAD-dependent lysine deacetylase and desuccinylase that specifically removes acetyl and succinyl groups on target proteins. Modulates the activities of several proteins which are inactive in their acylated form. The chain is NAD-dependent protein deacylase from Caulobacter vibrioides (strain ATCC 19089 / CIP 103742 / CB 15) (Caulobacter crescentus).